Here is a 403-residue protein sequence, read N- to C-terminus: Casein kinase I isoform delta-A (403 aa).

Residues 9–277 (YRLGRKIGSG…YLRQLFRNLF (269 aa)) enclose the Protein kinase domain. ATP contacts are provided by residues 15–23 (IGSGSFGDI) and Lys38. Catalysis depends on Asp128, which acts as the Proton acceptor. An autoinhibitory region spans residues 315–340 (QGRIPLPRVMLPTSSGRPRGTQEVAP). The interval 322–403 (RVMLPTSSGR…PSGLQSAVPR (82 aa)) is disordered.

This sequence belongs to the protein kinase superfamily. Monomer. Interacts with per1 and per2. Component of the circadian core oscillator. Autophosphorylated on serine and threonine residues.

It localises to the cytoplasm. The protein resides in the nucleus. It carries out the reaction L-seryl-[protein] + ATP = O-phospho-L-seryl-[protein] + ADP + H(+). The catalysed reaction is L-threonyl-[protein] + ATP = O-phospho-L-threonyl-[protein] + ADP + H(+). Its activity is regulated as follows. Exhibits substrate-dependent heparin activation. Functionally, casein kinases are operationally defined by their preferential utilization of acidic proteins such as caseins as substrates. Central component of the circadian clock. May act as a negative regulator of circadian rhythmicity by phosphorylating per1 and per2, which may lead to their degradation. Participates in wnt signaling. This Danio rerio (Zebrafish) protein is Casein kinase I isoform delta-A (csnk1da).